Consider the following 254-residue polypeptide: Imidazole glycerol phosphate synthase subunit HisF (254 aa).

Active-site residues include D12 and D131.

It belongs to the HisA/HisF family. As to quaternary structure, heterodimer of HisH and HisF.

The protein localises to the cytoplasm. It carries out the reaction 5-[(5-phospho-1-deoxy-D-ribulos-1-ylimino)methylamino]-1-(5-phospho-beta-D-ribosyl)imidazole-4-carboxamide + L-glutamine = D-erythro-1-(imidazol-4-yl)glycerol 3-phosphate + 5-amino-1-(5-phospho-beta-D-ribosyl)imidazole-4-carboxamide + L-glutamate + H(+). It participates in amino-acid biosynthesis; L-histidine biosynthesis; L-histidine from 5-phospho-alpha-D-ribose 1-diphosphate: step 5/9. Its function is as follows. IGPS catalyzes the conversion of PRFAR and glutamine to IGP, AICAR and glutamate. The HisF subunit catalyzes the cyclization activity that produces IGP and AICAR from PRFAR using the ammonia provided by the HisH subunit. This is Imidazole glycerol phosphate synthase subunit HisF from Leuconostoc mesenteroides subsp. mesenteroides (strain ATCC 8293 / DSM 20343 / BCRC 11652 / CCM 1803 / JCM 6124 / NCDO 523 / NBRC 100496 / NCIMB 8023 / NCTC 12954 / NRRL B-1118 / 37Y).